Here is a 792-residue protein sequence, read N- to C-terminus: LPS-assembly protein LptD (792 aa).

The first 22 residues, 1–22 (MYRVLRLLPLPLSVAISLSALA), serve as a signal peptide directing secretion.

It belongs to the LptD family. As to quaternary structure, component of the lipopolysaccharide transport and assembly complex. Interacts with LptE and LptA.

It is found in the cell outer membrane. Its function is as follows. Together with LptE, is involved in the assembly of lipopolysaccharide (LPS) at the surface of the outer membrane. This Xylella fastidiosa (strain Temecula1 / ATCC 700964) protein is LPS-assembly protein LptD.